We begin with the raw amino-acid sequence, 158 residues long: Ribosome maturation factor RimP (158 aa).

The protein belongs to the RimP family.

It is found in the cytoplasm. In terms of biological role, required for maturation of 30S ribosomal subunits. This chain is Ribosome maturation factor RimP, found in Pseudomonas savastanoi pv. phaseolicola (strain 1448A / Race 6) (Pseudomonas syringae pv. phaseolicola (strain 1448A / Race 6)).